Consider the following 744-residue polypeptide: Phosphoribosylformylglycinamidine synthase subunit PurL (744 aa).

His-50 is an active-site residue. ATP contacts are provided by Tyr-53 and Lys-92. Glu-94 contributes to the Mg(2+) binding site. Substrate-binding positions include 95–98 (SHNH) and Arg-117. His-96 acts as the Proton acceptor in catalysis. Residue Asp-118 coordinates Mg(2+). Position 241 (Gln-241) interacts with substrate. Asp-269 contacts Mg(2+). Substrate is bound at residue 313 to 315 (ESQ). ATP contacts are provided by Asp-494 and Gly-531. Residue Asn-532 participates in Mg(2+) binding. Ser-534 lines the substrate pocket.

This sequence belongs to the FGAMS family. In terms of assembly, monomer. Part of the FGAM synthase complex composed of 1 PurL, 1 PurQ and 2 PurS subunits.

The protein localises to the cytoplasm. The enzyme catalyses N(2)-formyl-N(1)-(5-phospho-beta-D-ribosyl)glycinamide + L-glutamine + ATP + H2O = 2-formamido-N(1)-(5-O-phospho-beta-D-ribosyl)acetamidine + L-glutamate + ADP + phosphate + H(+). It participates in purine metabolism; IMP biosynthesis via de novo pathway; 5-amino-1-(5-phospho-D-ribosyl)imidazole from N(2)-formyl-N(1)-(5-phospho-D-ribosyl)glycinamide: step 1/2. Part of the phosphoribosylformylglycinamidine synthase complex involved in the purines biosynthetic pathway. Catalyzes the ATP-dependent conversion of formylglycinamide ribonucleotide (FGAR) and glutamine to yield formylglycinamidine ribonucleotide (FGAM) and glutamate. The FGAM synthase complex is composed of three subunits. PurQ produces an ammonia molecule by converting glutamine to glutamate. PurL transfers the ammonia molecule to FGAR to form FGAM in an ATP-dependent manner. PurS interacts with PurQ and PurL and is thought to assist in the transfer of the ammonia molecule from PurQ to PurL. This chain is Phosphoribosylformylglycinamidine synthase subunit PurL, found in Chelativorans sp. (strain BNC1).